A 2363-amino-acid polypeptide reads, in one-letter code: Highly reducing polyketide synthase cnsI (2363 aa).

The region spanning 14-440 is the Ketosynthase family 3 (KS3) domain; it reads PEPIAIIGMS…GSNAHAIVES (427 aa). Active-site for beta-ketoacyl synthase activity residues include cysteine 187, histidine 322, and histidine 363. The malonyl-CoA:ACP transacylase (MAT) domain stretch occupies residues 546–854; sequence LAFVFTGQGA…FLQVLKSINA (309 aa). Serine 638 serves as the catalytic For malonyltransferase activity. An N-terminal hotdog fold region spans residues 938 to 1068; sequence HDLLGSPMDF…GTFTLHYDAR (131 aa). Positions 938 to 1224 are dehydratase (DH) domain; that stretch reads HDLLGSPMDF…RLDSIASDVS (287 aa). The 309-residue stretch at 938–1246 folds into the PKS/mFAS DH domain; that stretch reads HDLLGSPMDF…LGPVPMSKVP (309 aa). Catalysis depends on histidine 970, which acts as the Proton acceptor; for dehydratase activity. Residues 1089–1246 are C-terminal hotdog fold; the sequence is TAECETNRDA…LGPVPMSKVP (158 aa). Aspartate 1159 acts as the Proton donor; for dehydratase activity in catalysis. The tract at residues 1669–1976 is enoylreductase (ER) domain; that stretch reads GGQWVEDRQL…ARQTGISVAI (308 aa). Positions 2001-2177 are catalytic ketoreductase (KRc) domain; the sequence is TYLLAGGLGM…PGHSIDIGLV (177 aa). Residues 2279–2357 enclose the Carrier domain; that stretch reads EDASYVVNQA…VLSEKIAAQS (79 aa). An O-(pantetheine 4'-phosphoryl)serine modification is found at serine 2317.

It participates in alkaloid biosynthesis. Functionally, highly reducing polyketide synthase; part of the gene cluster that mediates the biosynthesis of communesins, a prominent class of indole alkaloids with great potential as pharmaceuticals. Communesins are biosynthesized by the coupling of tryptamine and aurantioclavine, two building blocks derived from L-tryptophan. The L-tryptophan decarboxylase cnsB converts L-tryptophan to tryptamine, whereas the tryptophan dimethylallyltransferase cnsF converts L-tryptophan to 4-dimethylallyl tryptophan which is further transformed to aurantioclavine by the aurantioclavine synthase cnsA, probably aided by the catalase cnsD. The cytochrome P450 monooxygenase cnsC catalyzes the heterodimeric coupling between the two different indole moieties, tryptamine and aurantioclavine, to construct vicinal quaternary stereocenters and yield the heptacyclic communesin scaffold. The O-methyltransferase cnsE then methylates the communesin scaffold to produce communesin K, the simplest characterized communesin that contains the heptacyclic core. The dioxygenase cnsJ converts communesin K into communesin I. Acylation to introduce the hexadienyl group at position N16 of communesin I by the acyltransferase cnsK leads to the production of communesin B. The hexadienyl group is produced by the highly reducing polyketide synthase cnsI, before being hydrolytically removed from cnsI by the serine hydrolase cnsH, converted into hexadienyl-CoA by the CoA ligase cnsG, and then transferred to communesin I by cnsK. Surprisingly, cnsK may also be a promiscuous acyltransferase that can tolerate a range of acyl groups, including acetyl-, propionyl-, and butyryl-CoA, which lead to communesins A, G and H respectively. The roles of the alpha-ketoglutarate-dependent dioxygenases cnsM and cnsP have still to be determined. The chain is Highly reducing polyketide synthase cnsI from Penicillium expansum (Blue mold rot fungus).